The following is a 439-amino-acid chain: Protein PHYTOCHROME KINASE SUBSTRATE 1 (439 aa).

Residues 1 to 14 (MVTLTPSSASTPKT) are compositionally biased toward polar residues. Disordered stretches follow at residues 1 to 22 (MVTL…MKNN), 54 to 80 (KTLN…APED), and 100 to 139 (QGSS…SSWN). Basic and acidic residues predominate over residues 63–79 (KQEEFGDEKKMVKKAPE). Polar residues-rich tracts occupy residues 100 to 109 (QGSSVLSLTN) and 118 to 139 (DSKQ…SSWN). A phosphoserine mark is found at serine 238 and serine 244. Disordered regions lie at residues 259–311 (LPLP…PTCY) and 355–439 (TAKS…LYSQ). A compositionally biased stretch (basic and acidic residues) spans 412–421 (TKPKSFETRR). A compositionally biased stretch (low complexity) spans 424 to 439 (SNSSISHTQSSLLYSQ).

It belongs to the PKS family. In terms of assembly, interacts with PKS2, RPT3, PHOT1, PHOT2 and the C-termini of both phytochromes A (phyA) and B (phyB). Binds both spectral forms of phytochrome, Pr and Pfr. Post-translationally, phosphorylated on Ser and to a lower extent on Thr by phytochromes. Phosphorylation is stimulated twofold by red light. As to expression, expressed in young seedlings in both darkness and light. Moderate in leaves and very low in roots and flowers. Expressed in the elongation zone of the root and hypocotyl.

The protein resides in the cell membrane. Its function is as follows. May be responsible for light-regulated cytoplasmic sequestration of phytochromes or may be a negative regulator of phytochrome B signaling. Component of the network that modulates the very low-fluence response (VLFR) branch of phyA signaling. Acts positively in PHOT1 signaling. Regulates phytochrome-mediated photomorphogenesis and hypocotyl phototropism. Involved in the control of leaf flattening and leaf positioning. Promotes negative root phototropism and negatively regulates root gravitropism. May act by controlling auxin homeostasis. In Arabidopsis thaliana (Mouse-ear cress), this protein is Protein PHYTOCHROME KINASE SUBSTRATE 1 (PKS1).